The primary structure comprises 386 residues: Methylthioribose-1-phosphate isomerase (386 aa).

Catalysis depends on D258, which acts as the Proton donor.

Belongs to the eIF-2B alpha/beta/delta subunits family. MtnA subfamily.

It localises to the cytoplasm. It is found in the nucleus. It carries out the reaction 5-(methylsulfanyl)-alpha-D-ribose 1-phosphate = 5-(methylsulfanyl)-D-ribulose 1-phosphate. The protein operates within amino-acid biosynthesis; L-methionine biosynthesis via salvage pathway; L-methionine from S-methyl-5-thio-alpha-D-ribose 1-phosphate: step 1/6. Catalyzes the interconversion of methylthioribose-1-phosphate (MTR-1-P) into methylthioribulose-1-phosphate (MTRu-1-P). In Uncinocarpus reesii (strain UAMH 1704), this protein is Methylthioribose-1-phosphate isomerase.